A 243-amino-acid chain; its full sequence is Ubiquinone/menaquinone biosynthesis C-methyltransferase UbiE (243 aa).

S-adenosyl-L-methionine contacts are provided by residues threonine 69, aspartate 90, and 116–117 (DA).

This sequence belongs to the class I-like SAM-binding methyltransferase superfamily. MenG/UbiE family.

It carries out the reaction a 2-demethylmenaquinol + S-adenosyl-L-methionine = a menaquinol + S-adenosyl-L-homocysteine + H(+). The enzyme catalyses a 2-methoxy-6-(all-trans-polyprenyl)benzene-1,4-diol + S-adenosyl-L-methionine = a 5-methoxy-2-methyl-3-(all-trans-polyprenyl)benzene-1,4-diol + S-adenosyl-L-homocysteine + H(+). Its pathway is quinol/quinone metabolism; menaquinone biosynthesis; menaquinol from 1,4-dihydroxy-2-naphthoate: step 2/2. It functions in the pathway cofactor biosynthesis; ubiquinone biosynthesis. In terms of biological role, methyltransferase required for the conversion of demethylmenaquinol (DMKH2) to menaquinol (MKH2) and the conversion of 2-polyprenyl-6-methoxy-1,4-benzoquinol (DDMQH2) to 2-polyprenyl-3-methyl-6-methoxy-1,4-benzoquinol (DMQH2). The polypeptide is Ubiquinone/menaquinone biosynthesis C-methyltransferase UbiE (Paraburkholderia phytofirmans (strain DSM 17436 / LMG 22146 / PsJN) (Burkholderia phytofirmans)).